Reading from the N-terminus, the 173-residue chain is Putative metal-dependent hydrolase BCG9842_B2589 (173 aa).

Zn(2+) is bound by residues histidine 65, histidine 156, and histidine 160.

The protein belongs to the metal hydrolase YfiT family. In terms of assembly, homodimer. Zn(2+) is required as a cofactor.

It localises to the cytoplasm. Functionally, possible metal-dependent hydrolase. This Bacillus cereus (strain G9842) protein is Putative metal-dependent hydrolase BCG9842_B2589.